We begin with the raw amino-acid sequence, 102 residues long: Putative toxin YafQ (102 aa).

It belongs to the RelE toxin family. YafQ subfamily.

Functionally, toxic component of a type II toxin-antitoxin (TA) system. Its cognate antitoxin is RelB. This Haemophilus influenzae (strain ATCC 51907 / DSM 11121 / KW20 / Rd) protein is Putative toxin YafQ.